Here is a 206-residue protein sequence, read N- to C-terminus: Homoserine/homoserine lactone efflux protein (206 aa).

The next 6 helical transmembrane spans lie at 5–25 (WWFAYLLTSIILSLSPGSGAI), 45–65 (GLQTGLAIHIVLVGVGLGTLF), 68–88 (SVIAFEVLKWAGAAYLIWLGI), 117–137 (FVNLTNPKSIVFLAALFPQFI), 148–168 (IVLGVTTIVVDIIVMIGYATL), and 182–202 (MKALNKIFGSLFMLVGALLAS).

Belongs to the Rht family.

The protein localises to the cell membrane. Conducts the efflux of homoserine and homoserine lactone. The sequence is that of Homoserine/homoserine lactone efflux protein (rhtB) from Escherichia coli O157:H7.